Here is a 245-residue protein sequence, read N- to C-terminus: 8-amino-3,8-dideoxy-manno-octulosonate cytidylyltransferase (245 aa).

The protein belongs to the KdsB family.

The protein localises to the cytoplasm. It carries out the reaction 8-amino-3,8-dideoxy-alpha-D-manno-octulosonate + CTP = CMP-8-amino-3,8-dideoxy-alpha-D-manno-oct-2-ulosonate + diphosphate. It functions in the pathway bacterial outer membrane biogenesis; lipopolysaccharide biosynthesis. Activates KDO8N (a required 8-carbon sugar) for incorporation into bacterial lipopolysaccharide in the Shewanella genus. The chain is 8-amino-3,8-dideoxy-manno-octulosonate cytidylyltransferase from Shewanella baltica (strain OS195).